Consider the following 186-residue polypeptide: Probable chorismate pyruvate-lyase (186 aa).

Residues Arg-80, Leu-118, and Glu-170 each contribute to the substrate site.

Belongs to the UbiC family.

Its subcellular location is the cytoplasm. It carries out the reaction chorismate = 4-hydroxybenzoate + pyruvate. It functions in the pathway cofactor biosynthesis; ubiquinone biosynthesis. Removes the pyruvyl group from chorismate, with concomitant aromatization of the ring, to provide 4-hydroxybenzoate (4HB) for the ubiquinone pathway. The sequence is that of Probable chorismate pyruvate-lyase from Pseudomonas syringae pv. syringae (strain B728a).